Consider the following 217-residue polypeptide: Transcriptional regulatory protein CutR (217 aa).

Residues 2 to 116 enclose the Response regulatory domain; the sequence is RVLVVEDEQL…ELIARVRALG (115 aa). The residue at position 51 (aspartate 51) is a 4-aspartylphosphate. The ompR/PhoB-type DNA-binding region spans 124–217; the sequence is PPVLERAGIK…VTVPGSGYRI (94 aa).

Member of the two-component regulatory system CutS/CutR, involved in the regulation of copper metabolism. CutR suppresses a defective melC1 gene, encoding a putative copper-transfer gene, probably by altering copper metabolism. This Streptomyces lividans protein is Transcriptional regulatory protein CutR (cutR).